Here is a 114-residue protein sequence, read N- to C-terminus: MAVNLYDYANQLEQALRDSDEYKAIKDAFAKVKENEESKKLFDEFRETQMNFQQKQMQGEEIPEEDLQKAQEQAQAIEKDENISELMNAEQKMSQVFQEINQIIVKPLDEIYAD.

This sequence belongs to the UPF0342 family.

The chain is UPF0342 protein SE_1526 from Staphylococcus epidermidis (strain ATCC 12228 / FDA PCI 1200).